A 509-amino-acid polypeptide reads, in one-letter code: Maturase K (509 aa).

The protein belongs to the intron maturase 2 family. MatK subfamily.

The protein localises to the plastid. The protein resides in the chloroplast. Functionally, usually encoded in the trnK tRNA gene intron. Probably assists in splicing its own and other chloroplast group II introns. The polypeptide is Maturase K (Eucommia ulmoides (Hardy rubber tree)).